The primary structure comprises 908 residues: Protein translocase subunit SecA (908 aa).

Residues Gln87, 105-109, and Asp512 each bind ATP; that span reads GEGKT. The segment at 865-908 is disordered; the sequence is GGDDGSDEMMAHTPMIRDGDKVGRNDPCPCGSGRKYKQCHGKLS. Over residues 879–888 the composition is skewed to basic and acidic residues; sequence MIRDGDKVGR. Residues Cys892, Cys894, Cys903, and His904 each contribute to the Zn(2+) site. The span at 898–908 shows a compositional bias: basic residues; sequence RKYKQCHGKLS.

The protein belongs to the SecA family. As to quaternary structure, monomer and homodimer. Part of the essential Sec protein translocation apparatus which comprises SecA, SecYEG and auxiliary proteins SecDF-YajC and YidC. The cofactor is Zn(2+).

It localises to the cell inner membrane. The protein resides in the cytoplasm. The catalysed reaction is ATP + H2O + cellular proteinSide 1 = ADP + phosphate + cellular proteinSide 2.. Part of the Sec protein translocase complex. Interacts with the SecYEG preprotein conducting channel. Has a central role in coupling the hydrolysis of ATP to the transfer of proteins into and across the cell membrane, serving both as a receptor for the preprotein-SecB complex and as an ATP-driven molecular motor driving the stepwise translocation of polypeptide chains across the membrane. This is Protein translocase subunit SecA from Shewanella sp. (strain ANA-3).